Reading from the N-terminus, the 333-residue chain is Taste receptor type 2 member 38 (333 aa).

At 1-17 the chain is on the extracellular side; sequence MLTLTRICAVSYEVRST. Residues 18-38 form a helical membrane-spanning segment; the sequence is FLFISVLEFAVGFLTNAFIFL. Topologically, residues 39–55 are cytoplasmic; the sequence is VNFWDVVKRQPLSNSDC. The helical transmembrane segment at 56–76 threads the bilayer; it reads VLLCLSISRLFLHGLLFLSAI. Residues 77-94 are Extracellular-facing; it reads QLTHFQKLSEPLNHSYQA. The helical transmembrane segment at 95–115 threads the bilayer; sequence IIMLWIIANQANLWLAACLSL. Over 116 to 142 the chain is Cytoplasmic; that stretch reads LYCSKLIRFSHTFLICLASWVSRKISQ. The chain crosses the membrane as a helical span at residues 143-163; the sequence is MLLGIILCSCICTVLCVWCFF. At 164-190 the chain is on the extracellular side; that stretch reads SRPHFTVTTFLFMNNNTRLNWQIKDLN. N-linked (GlcNAc...) asparagine glycosylation occurs at asparagine 178. A helical transmembrane segment spans residues 191–211; sequence LFYSFLFCYLWSVPPFLLFLV. Residues 212–251 are Cytoplasmic-facing; it reads SSGMLTVSLGRHMRTMKVYTRDSRDPSLEAHIKALKSLVS. Residues 252–272 traverse the membrane as a helical segment; the sequence is FFCFFVISSCAAFISVPLLIL. Residues 273–276 are Extracellular-facing; it reads WRNK. The chain crosses the membrane as a helical span at residues 277-297; that stretch reads IGVMVCVGIMAACPSGHAAVL. Residues 298-333 are Cytoplasmic-facing; the sequence is ISGNATLRRAVTTILLWAQSSMKVRADHKADSRTLC.

Belongs to the G-protein coupled receptor T2R family.

The protein localises to the membrane. Receptor that may play a role in the perception of bitterness and is gustducin-linked. May play a role in sensing the chemical composition of the gastrointestinal content. The activity of this receptor may stimulate alpha gustducin, mediate PLC-beta-2 activation and lead to the gating of TRPM5. This Pongo pygmaeus (Bornean orangutan) protein is Taste receptor type 2 member 38 (TAS2R38).